A 519-amino-acid chain; its full sequence is Glutamate--cysteine ligase (519 aa).

This sequence belongs to the glutamate--cysteine ligase type 1 family. Type 1 subfamily.

The catalysed reaction is L-cysteine + L-glutamate + ATP = gamma-L-glutamyl-L-cysteine + ADP + phosphate + H(+). Its pathway is sulfur metabolism; glutathione biosynthesis; glutathione from L-cysteine and L-glutamate: step 1/2. This chain is Glutamate--cysteine ligase, found in Yersinia enterocolitica serotype O:8 / biotype 1B (strain NCTC 13174 / 8081).